We begin with the raw amino-acid sequence, 272 residues long: NH(3)-dependent NAD(+) synthetase (272 aa).

45–52 is an ATP binding site; that stretch reads GISGGQDS. Residue Asp51 participates in Mg(2+) binding. Arg138 lines the deamido-NAD(+) pocket. Residue Thr158 coordinates ATP. Glu163 lines the Mg(2+) pocket. Residues Lys171 and Asp178 each coordinate deamido-NAD(+). ATP is bound by residues Lys187 and Thr209. 258-259 is a deamido-NAD(+) binding site; the sequence is HK.

The protein belongs to the NAD synthetase family. As to quaternary structure, homodimer.

The enzyme catalyses deamido-NAD(+) + NH4(+) + ATP = AMP + diphosphate + NAD(+) + H(+). Its pathway is cofactor biosynthesis; NAD(+) biosynthesis; NAD(+) from deamido-NAD(+) (ammonia route): step 1/1. Its function is as follows. Catalyzes the ATP-dependent amidation of deamido-NAD to form NAD. Uses ammonia as a nitrogen source. This chain is NH(3)-dependent NAD(+) synthetase, found in Bacillus cereus (strain ATCC 14579 / DSM 31 / CCUG 7414 / JCM 2152 / NBRC 15305 / NCIMB 9373 / NCTC 2599 / NRRL B-3711).